We begin with the raw amino-acid sequence, 3387 residues long: Genome polyprotein (3387 aa).

Residues 1 to 100 (MNQRKKVVRP…LNILNGRKRS (100 aa)) are Cytoplasmic-facing. The hydrophobic; homodimerization of capsid protein C stretch occupies residues 36–71 (LFSGKGPLRMVLAFITFLRVLSIPPTAGILKRWGQL). Positions 100 to 113 (STMTLLCLIPTVMA) are cleaved as a propeptide — ER anchor for the capsid protein C, removed in mature form by serine protease NS3. Residues 101 to 117 (TMTLLCLIPTVMAFHLS) form a helical membrane-spanning segment. The Extracellular segment spans residues 118 to 237 (TRDGEPLMIV…GAWKHAQRVE (120 aa)). Residue N182 is glycosylated (N-linked (GlcNAc...) asparagine; by host). Residues 238 to 258 (SWILRNPGFALLAGFMAYMIG) form a helical membrane-spanning segment. Residues 259-265 (QTGIQRT) lie on the Cytoplasmic side of the membrane. A helical transmembrane segment spans residues 266–279 (VFFVLMMLVAPSYG). Residues 280-723 (MRCVGVGNRD…AVHQVFGSVY (444 aa)) are Extracellular-facing. 4 cysteine pairs are disulfide-bonded: C282-C309, C339-C400, C353-C384, and C371-C395. The N-linked (GlcNAc...) asparagine; by host glycan is linked to N346. Residues 377 to 390 (DRGWGNGCGLFGKG) form a fusion peptide region. N432 is a glycosylation site (N-linked (GlcNAc...) asparagine; by host). Intrachain disulfides connect C464–C564 and C581–C612. Residues 724 to 744 (TTMFGGVSWMVRILIGFLVLW) form a helical membrane-spanning segment. The Cytoplasmic segment spans residues 745–750 (IGTNSR). A helical transmembrane segment spans residues 751 to 771 (NTSMAMTCIAVGGITLFLGFT). The Extracellular segment spans residues 772 to 1194 (VQADMGCVVS…MLGDTMSGRI (423 aa)). 6 disulfides stabilise this stretch: C778/C789, C829/C917, C953/C997, C1054/C1103, C1065/C1087, and C1086/C1090. N-linked (GlcNAc...) asparagine; by host glycans are attached at residues N904 and N981. The helical transmembrane segment at 1195–1218 (GGQVHLAIMAVFKMSPGYVLGVFL) threads the bilayer. The Lumenal portion of the chain corresponds to 1219-1224 (RKLTSR). The chain crosses the membrane as a helical span at residues 1225 to 1243 (ETALMVIGMAMTTVLSIPH). Residues 1244 to 1267 (DLMELIDGISLGLILLKIVTQFDN) lie on the Cytoplasmic side of the membrane. A helical transmembrane segment spans residues 1268 to 1288 (TQVGTLALSLTFIRSTMPLVM). A1289 is a topological domain (lumenal). Residues 1290 to 1308 (WRTIMAVLFVVTLIPLCRT) traverse the membrane as a helical segment. At 1309 to 1316 (SCLQKQSH) the chain is on the lumenal side. A helical transmembrane segment spans residues 1317-1337 (WVEITALILGAQALPVYLMTL). Residues 1338–1345 (MKGASRRS) are Cytoplasmic-facing. The helical transmembrane segment at 1346 to 1366 (WPLNEGIMAVGLVSLLGSALL) threads the bilayer. Topologically, residues 1367 to 1369 (KND) are lumenal. A helical transmembrane segment spans residues 1370–1390 (VPLAGPMVAGGLLLAAYVMSG). Topologically, residues 1391 to 1437 (SSADLSLEKAANVQWDEMADITGSSPIIEVKQDEDGSFSIRDVEETN) are cytoplasmic. The segment at 1397–1436 (LEKAANVQWDEMADITGSSPIIEVKQDEDGSFSIRDVEET) is interacts with and activates NS3 protease. The segment at residues 1438–1458 (MITLLVKLALITVSGLYPLAI) is an intramembrane region (helical). At 1459-2143 (PVTMTLWYMW…QHALNELPES (685 aa)) the chain is on the cytoplasmic side. In terms of domain architecture, Peptidase S7 spans 1475 to 1652 (SGALWDVPSP…ERIGEPDYEV (178 aa)). Residues H1525, D1549, and S1609 each act as charge relay system; for serine protease NS3 activity in the active site. Residues 1654–1810 (EDIFRKKRLT…QSNSPIEDIE (157 aa)) enclose the Helicase ATP-binding domain. Positions 1658–1661 (RKKR) are important for RNA-binding. ATP is bound at residue 1667–1674 (LHPGAGKT). Positions 1758 to 1761 (DEAH) match the DEAH box motif. In terms of domain architecture, Helicase C-terminal spans 1820 to 1987 (TGFDWITDYQ…IIPTLFGPER (168 aa)). An N6-acetyllysine; by host modification is found at K1862. Residues 2144-2164 (LETLMLVALLGAMTAGTFLFF) form a helical membrane-spanning segment. The Lumenal segment spans residues 2165–2169 (MQGKG). The helical intramembrane region spans 2170–2190 (IGKLSMGLITIAVASGLLWVA). E2191 is a topological domain (lumenal). A helical transmembrane segment spans residues 2192 to 2212 (LQPQWIAASIILEFFLMVLLI). Residues 2213–2225 (PEPEKQRTPQDNQ) lie on the Cytoplasmic side of the membrane. Residues 2226 to 2246 (LIYVILTILTIIGLIAANEMG) traverse the membrane as a helical segment. At 2247 to 2270 (LIEKTKTDFGFYQVKTETTILDVD) the chain is on the lumenal side. The segment at residues 2271–2291 (LRPASAWTLYAVATTILTPML) is an intramembrane region (helical). The Lumenal portion of the chain corresponds to 2292 to 2301 (RHTIENTSAN). 2 N-linked (GlcNAc...) asparagine; by host glycosylation sites follow: N2297 and N2301. The segment at residues 2302–2322 (LSLAAIANQAAVLMGLGKGWP) is an intramembrane region (helical). At 2323-2343 (LHRVDLGVPLLAMGCYSQVNP) the chain is on the lumenal side. A helical transmembrane segment spans residues 2344-2364 (TTLTASLVMLLVHYAIIGPGL). Topologically, residues 2365 to 2409 (QAKATREAQKRTAAGIMKNPTVDGITVIDLEPISYDPKFEKQLGQ) are cytoplasmic. The helical transmembrane segment at 2410-2430 (VMLLVLCAGQLLLMRTTWAFC) threads the bilayer. The Lumenal portion of the chain corresponds to 2431-2455 (EVLTLATGPILTLWEGNPGRFWNTT). A glycan (N-linked (GlcNAc...) asparagine; by host) is linked at N2453. A helical membrane pass occupies residues 2456-2476 (IAVSTANIFRGSYLAGAGLAF). The Cytoplasmic portion of the chain corresponds to 2477 to 3387 (SLIKNAQTPR…SAPSESEGVL (911 aa)). One can recognise an mRNA cap 0-1 NS5-type MT domain in the interval 2489–2751 (TGTTGETLGE…DVDLGAGTRS (263 aa)). S2543 lines the S-adenosyl-L-methionine pocket. Phosphoserine is present on S2543. The active-site For 2'-O-MTase activity is K2548. The SUMO-interacting motif signature appears at 2564–2567 (VVDL). Residues G2573, W2574, T2591, K2592, D2618, and V2619 each coordinate S-adenosyl-L-methionine. D2633 serves as the catalytic For 2'-O-MTase activity. S-adenosyl-L-methionine is bound at residue I2634. Active-site for 2'-O-MTase activity residues include K2668 and E2704. Residue Y2706 coordinates S-adenosyl-L-methionine. Zn(2+)-binding residues include E2925, H2929, C2934, and C2937. Residues 3016-3166 (LMYADDTAGW…PLDERFSTSL (151 aa)) form the RdRp catalytic domain. H3200, C3216, and C3335 together coordinate Zn(2+).

It in the N-terminal section; belongs to the class I-like SAM-binding methyltransferase superfamily. mRNA cap 0-1 NS5-type methyltransferase family. Homodimer. Interacts (via N-terminus) with host EXOC1 (via C-terminus); this interaction results in EXOC1 degradation through the proteasome degradation pathway. As to quaternary structure, forms heterodimers with envelope protein E in the endoplasmic reticulum and Golgi. In terms of assembly, homodimer; in the endoplasmic reticulum and Golgi. Interacts with protein prM. Interacts with non-structural protein 1. Homodimer; Homohexamer when secreted. Interacts with envelope protein E. As to quaternary structure, interacts (via N-terminus) with serine protease NS3. In terms of assembly, forms a heterodimer with serine protease NS3. May form homooligomers. Forms a heterodimer with NS2B. Interacts with NS4B. Interacts with unphosphorylated RNA-directed RNA polymerase NS5; this interaction stimulates RNA-directed RNA polymerase NS5 guanylyltransferase activity. Interacts with host SHFL. As to quaternary structure, interacts with host MAVS; this interaction inhibits the synthesis of IFN-beta. Interacts with host SHFL. Interacts with host AUP1; the interaction occurs in the presence of Dengue virus NS4B and induces lipophagy which facilitates production of virus progeny particles. In terms of assembly, interacts with serine protease NS3. Homodimer. Interacts with host STAT2; this interaction inhibits the phosphorylation of the latter, and, when all viral proteins are present (polyprotein), targets STAT2 for degradation. Interacts with serine protease NS3. Interacts with host PAF1 complex; the interaction may prevent the recruitment of the PAF1 complex to interferon-responsive genes, and thus reduces the immune response. Post-translationally, specific enzymatic cleavages in vivo yield mature proteins. Cleavages in the lumen of endoplasmic reticulum are performed by host signal peptidase, whereas cleavages in the cytoplasmic side are performed by serine protease NS3. Signal cleavage at the 2K-4B site requires a prior NS3 protease-mediated cleavage at the 4A-2K site. Cleaved in post-Golgi vesicles by a host furin, releasing the mature small envelope protein M, and peptide pr. This cleavage is incomplete as up to 30% of viral particles still carry uncleaved prM. In terms of processing, N-glycosylated. Post-translationally, N-glycosylated. The excreted form is glycosylated and this is required for efficient secretion of the protein from infected cells. Acetylated by host KAT5. Acetylation modulates NS3 RNA-binding and unwinding activities and plays an important positive role for viral replication. In terms of processing, sumoylation of RNA-directed RNA polymerase NS5 increases NS5 protein stability allowing proper viral RNA replication. Post-translationally, phosphorylated on serines residues. This phosphorylation may trigger NS5 nuclear localization.

Its subcellular location is the virion. It is found in the host nucleus. It localises to the host cytoplasm. The protein localises to the host perinuclear region. The protein resides in the secreted. Its subcellular location is the virion membrane. It is found in the host endoplasmic reticulum membrane. It localises to the host mitochondrion. It carries out the reaction Selective hydrolysis of -Xaa-Xaa-|-Yaa- bonds in which each of the Xaa can be either Arg or Lys and Yaa can be either Ser or Ala.. It catalyses the reaction RNA(n) + a ribonucleoside 5'-triphosphate = RNA(n+1) + diphosphate. The catalysed reaction is a ribonucleoside 5'-triphosphate + H2O = a ribonucleoside 5'-diphosphate + phosphate + H(+). The enzyme catalyses ATP + H2O = ADP + phosphate + H(+). It carries out the reaction a 5'-end (5'-triphosphoguanosine)-ribonucleoside in mRNA + S-adenosyl-L-methionine = a 5'-end (N(7)-methyl 5'-triphosphoguanosine)-ribonucleoside in mRNA + S-adenosyl-L-homocysteine. It catalyses the reaction a 5'-end (N(7)-methyl 5'-triphosphoguanosine)-ribonucleoside in mRNA + S-adenosyl-L-methionine = a 5'-end (N(7)-methyl 5'-triphosphoguanosine)-(2'-O-methyl-ribonucleoside) in mRNA + S-adenosyl-L-homocysteine + H(+). Its function is as follows. Plays a role in virus budding by binding to the cell membrane and gathering the viral RNA into a nucleocapsid that forms the core of a mature virus particle. During virus entry, may induce genome penetration into the host cytoplasm after hemifusion induced by the surface proteins. Can migrate to the cell nucleus where it modulates host functions. Overcomes the anti-viral effects of host EXOC1 by sequestering and degrading the latter through the proteasome degradation pathway. In terms of biological role, inhibits RNA silencing by interfering with host Dicer. Functionally, prevents premature fusion activity of envelope proteins in trans-Golgi by binding to envelope protein E at pH6.0. After virion release in extracellular space, gets dissociated from E dimers. Acts as a chaperone for envelope protein E during intracellular virion assembly by masking and inactivating envelope protein E fusion peptide. prM is the only viral peptide matured by host furin in the trans-Golgi network probably to avoid catastrophic activation of the viral fusion activity in acidic Golgi compartment prior to virion release. prM-E cleavage is inefficient, and many virions are only partially matured. These uncleaved prM would play a role in immune evasion. Its function is as follows. May play a role in virus budding. Exerts cytotoxic effects by activating a mitochondrial apoptotic pathway through M ectodomain. May display a viroporin activity. In terms of biological role, binds to host cell surface receptor and mediates fusion between viral and cellular membranes. Envelope protein is synthesized in the endoplasmic reticulum in the form of heterodimer with protein prM. They play a role in virion budding in the ER, and the newly formed immature particle is covered with 60 spikes composed of heterodimer between precursor prM and envelope protein E. The virion is transported to the Golgi apparatus where the low pH causes dissociation of PrM-E heterodimers and formation of E homodimers. prM-E cleavage is inefficient, and many virions are only partially matured. These uncleaved prM would play a role in immune evasion. Functionally, involved in immune evasion, pathogenesis and viral replication. Once cleaved off the polyprotein, is targeted to three destinations: the viral replication cycle, the plasma membrane and the extracellular compartment. Essential for viral replication. Required for formation of the replication complex and recruitment of other non-structural proteins to the ER-derived membrane structures. Excreted as a hexameric lipoparticle that plays a role against host immune response. Antagonizing the complement function. Binds to the host macrophages and dendritic cells. Inhibits signal transduction originating from Toll-like receptor 3 (TLR3). Disrupts the host endothelial glycocalyx layer of host pulmonary microvascular endothelial cells, inducing degradation of sialic acid and shedding of heparan sulfate proteoglycans. NS1 induces expression of sialidases, heparanase, and activates cathepsin L, which activates heparanase via enzymatic cleavage. These effects are probably linked to the endothelial hyperpermeability observed in severe dengue disease. Its function is as follows. Component of the viral RNA replication complex that functions in virion assembly and antagonizes the host immune response. In terms of biological role, required cofactor for the serine protease function of NS3. May have membrane-destabilizing activity and form viroporins. Functionally, displays three enzymatic activities: serine protease, NTPase and RNA helicase. NS3 serine protease, in association with NS2B, performs its autocleavage and cleaves the polyprotein at dibasic sites in the cytoplasm: C-prM, NS2A-NS2B, NS2B-NS3, NS3-NS4A, NS4A-2K and NS4B-NS5. NS3 RNA helicase binds RNA and unwinds dsRNA in the 3' to 5' direction. Regulates the ATPase activity of the NS3 helicase activity. NS4A allows NS3 helicase to conserve energy during unwinding. Plays a role in the inhibition of the host innate immune response. Interacts with host MAVS and thereby prevents the interaction between RIGI and MAVS. In turn, IFN-beta production is impaired. Interacts with host AUP1 which mediates induction of lipophagy in host cells and facilitates production of virus progeny particles. Its function is as follows. Functions as a signal peptide for NS4B and is required for the interferon antagonism activity of the latter. In terms of biological role, induces the formation of ER-derived membrane vesicles where the viral replication takes place. Inhibits interferon (IFN)-induced host STAT1 phosphorylation and nuclear translocation, thereby preventing the establishment of cellular antiviral state by blocking the IFN-alpha/beta pathway. Functionally, replicates the viral (+) and (-) RNA genome, and performs the capping of genomes in the cytoplasm. NS5 methylates viral RNA cap at guanine N-7 and ribose 2'-O positions. Besides its role in RNA genome replication, also prevents the establishment of cellular antiviral state by blocking the interferon-alpha/beta (IFN-alpha/beta) signaling pathway. Inhibits host TYK2 and STAT2 phosphorylation, thereby preventing activation of JAK-STAT signaling pathway. May reduce immune responses by preventing the recruitment of the host PAF1 complex to interferon-responsive genes. This Dengue virus type 4 (strain Singapore/8976/1995) (DENV-4) protein is Genome polyprotein.